The chain runs to 301 residues: Acetylglutamate kinase (301 aa).

Residues 68–69, Arg90, and Asn195 contribute to the substrate site; that span reads GG.

Belongs to the acetylglutamate kinase family. ArgB subfamily.

It localises to the cytoplasm. It catalyses the reaction N-acetyl-L-glutamate + ATP = N-acetyl-L-glutamyl 5-phosphate + ADP. It participates in amino-acid biosynthesis; L-arginine biosynthesis; N(2)-acetyl-L-ornithine from L-glutamate: step 2/4. Catalyzes the ATP-dependent phosphorylation of N-acetyl-L-glutamate. The protein is Acetylglutamate kinase of Pseudomonas fluorescens (strain Pf0-1).